Here is a 213-residue protein sequence, read N- to C-terminus: MADIEGLLHEVADAVISCKKEKVLEAVEKARAEVPPEEIIEKGLSAGMNQVGVLFERGKLFLPHVMMAADAMTTGVKLLEADLPAGAEKKLGVIVNGTVEGDVHDIGKSIVSTMLQSAGFEVHDIGRDVPIRDFIEKAKETDADMIGISALMTTTLQGQRDVIELLKEEGLRSRVKVMVGGAPATQAWADKIGADCYAENASEAVAKAKELLL.

In terms of domain architecture, B12-binding N-terminal spans 1–91 (MADIEGLLHE…DLPAGAEKKL (91 aa)). The B12-binding domain maps to 92-213 (GVIVNGTVEG…AVAKAKELLL (122 aa)). His-104 is a methylcob(III)alamin binding site.

This sequence belongs to the methylamine corrinoid protein family.

It functions in the pathway one-carbon metabolism; methanogenesis from dimethylamine. In terms of biological role, acts as a methyl group carrier between MtbB and MtbA. This chain is Dimethylamine corrinoid protein 3 (mtbC3), found in Methanosarcina acetivorans (strain ATCC 35395 / DSM 2834 / JCM 12185 / C2A).